Here is a 325-residue protein sequence, read N- to C-terminus: Pyruvate dehydrogenase E1 component subunit beta (325 aa).

A thiamine diphosphate-binding site is contributed by Glu-60.

Heterodimer of an alpha and a beta chain. Thiamine diphosphate serves as cofactor.

It catalyses the reaction N(6)-[(R)-lipoyl]-L-lysyl-[protein] + pyruvate + H(+) = N(6)-[(R)-S(8)-acetyldihydrolipoyl]-L-lysyl-[protein] + CO2. In terms of biological role, the pyruvate dehydrogenase complex catalyzes the overall conversion of pyruvate to acetyl-CoA and CO(2). It contains multiple copies of three enzymatic components: pyruvate dehydrogenase (E1), dihydrolipoamide acetyltransferase (E2) and lipoamide dehydrogenase (E3). This chain is Pyruvate dehydrogenase E1 component subunit beta (pdhB), found in Staphylococcus aureus (strain Mu50 / ATCC 700699).